We begin with the raw amino-acid sequence, 212 residues long: Large ribosomal subunit protein uL3 (212 aa).

Residues 136 to 155 (THGNSLSHRSNGSIGQNQTP) are disordered. Glutamine 153 carries the post-translational modification N5-methylglutamine.

This sequence belongs to the universal ribosomal protein uL3 family. As to quaternary structure, part of the 50S ribosomal subunit. Forms a cluster with proteins L14 and L19. Methylated by PrmB.

In terms of biological role, one of the primary rRNA binding proteins, it binds directly near the 3'-end of the 23S rRNA, where it nucleates assembly of the 50S subunit. The polypeptide is Large ribosomal subunit protein uL3 (Shewanella oneidensis (strain ATCC 700550 / JCM 31522 / CIP 106686 / LMG 19005 / NCIMB 14063 / MR-1)).